The following is a 293-amino-acid chain: Energy-coupling factor transporter ATP-binding protein EcfA2 (293 aa).

The ABC transporter domain maps to Ile3–Asp246. Position 40-47 (Gly40–Ser47) interacts with ATP.

Belongs to the ABC transporter superfamily. Energy-coupling factor EcfA family. Forms a stable energy-coupling factor (ECF) transporter complex composed of 2 membrane-embedded substrate-binding proteins (S component), 2 ATP-binding proteins (A component) and 2 transmembrane proteins (T component).

Its subcellular location is the cell membrane. ATP-binding (A) component of a common energy-coupling factor (ECF) ABC-transporter complex. Unlike classic ABC transporters this ECF transporter provides the energy necessary to transport a number of different substrates. This chain is Energy-coupling factor transporter ATP-binding protein EcfA2, found in Bacillus cereus (strain ATCC 14579 / DSM 31 / CCUG 7414 / JCM 2152 / NBRC 15305 / NCIMB 9373 / NCTC 2599 / NRRL B-3711).